A 173-amino-acid polypeptide reads, in one-letter code: Adenine phosphoribosyltransferase (173 aa).

This sequence belongs to the purine/pyrimidine phosphoribosyltransferase family. Homodimer.

The protein resides in the cytoplasm. The catalysed reaction is AMP + diphosphate = 5-phospho-alpha-D-ribose 1-diphosphate + adenine. Its pathway is purine metabolism; AMP biosynthesis via salvage pathway; AMP from adenine: step 1/1. Its function is as follows. Catalyzes a salvage reaction resulting in the formation of AMP, that is energically less costly than de novo synthesis. This chain is Adenine phosphoribosyltransferase, found in Desulfosudis oleivorans (strain DSM 6200 / JCM 39069 / Hxd3) (Desulfococcus oleovorans).